The chain runs to 300 residues: Cation-efflux pump FieF (300 aa).

Helical transmembrane passes span 12 to 32 (AALS…FAWW), 40 to 60 (LAAL…LFVV), 82 to 102 (AALA…LTGF), and 114 to 134 (PGLG…LVTF). Residues D45 and D49 each contribute to the Zn(2+) site. The Zn(2+) site is built by H153 and D157. Residues 164-184 (ILIALALSWYGFHRADALFAL) traverse the membrane as a helical segment.

It belongs to the cation diffusion facilitator (CDF) transporter (TC 2.A.4) family. FieF subfamily. As to quaternary structure, homodimer.

The protein localises to the cell inner membrane. The catalysed reaction is Zn(2+)(in) + H(+)(out) = Zn(2+)(out) + H(+)(in). It carries out the reaction Cd(2+)(in) + H(+)(out) = Cd(2+)(out) + H(+)(in). The enzyme catalyses Fe(2+)(in) + H(+)(out) = Fe(2+)(out) + H(+)(in). Divalent metal cation transporter which exports Zn(2+), Cd(2+) and possibly Fe(2+). May be involved in zinc and iron detoxification by efflux. In Yersinia enterocolitica serotype O:8 / biotype 1B (strain NCTC 13174 / 8081), this protein is Cation-efflux pump FieF.